Consider the following 392-residue polypeptide: MILPTIVHLDADAFFVSCELALKPELRGTKCAVGGRERGIISSASYEARACGVYTPMPTTRALKVCPDLIMLPHTGGLYSRVSRQMFELCETLTPLVQRNSIDEGYLDLGPCGFKTSAEIEQAVHGLQHKIEQQLQITASFGLAVNKLVAQIASKLRKPKGFVVVPSGTEAEFLAPLPIGKLPGVGPKTEERLVGRHGIKLVRDLLARGEAELEAIFGDGWREMRDGALGIDDRPVETEHEDAKSYSQQETFDEDIASFAEIERVVKRMIDELLPKIREDGKRVRTMTVKVRYPDFSQESHGRSLSAGTDLEAPFYPLVTPLLRQAWTKKRPLRLVSVRFSGVEDTPVQLEMFAQNEEKRRRLAAVLDHLNRRGGDAVVQHGHQLAKRPPPR.

Positions Ile-6–Gly-186 constitute a UmuC domain. Positions 10 and 103 each coordinate Mg(2+). The active site involves Glu-104.

The protein belongs to the DNA polymerase type-Y family. In terms of assembly, monomer. The cofactor is Mg(2+).

The protein localises to the cytoplasm. It catalyses the reaction DNA(n) + a 2'-deoxyribonucleoside 5'-triphosphate = DNA(n+1) + diphosphate. Functionally, poorly processive, error-prone DNA polymerase involved in untargeted mutagenesis. Copies undamaged DNA at stalled replication forks, which arise in vivo from mismatched or misaligned primer ends. These misaligned primers can be extended by PolIV. Exhibits no 3'-5' exonuclease (proofreading) activity. May be involved in translesional synthesis, in conjunction with the beta clamp from PolIII. This Opitutus terrae (strain DSM 11246 / JCM 15787 / PB90-1) protein is DNA polymerase IV.